The sequence spans 198 residues: Potassium-transporting ATPase KdpC subunit (198 aa).

A helical membrane pass occupies residues 8–28 (ILAVLVFTILCGIIYPVSTTV).

Belongs to the KdpC family. As to quaternary structure, the system is composed of three essential subunits: KdpA, KdpB and KdpC.

The protein resides in the cell membrane. Part of the high-affinity ATP-driven potassium transport (or Kdp) system, which catalyzes the hydrolysis of ATP coupled with the electrogenic transport of potassium into the cytoplasm. This subunit acts as a catalytic chaperone that increases the ATP-binding affinity of the ATP-hydrolyzing subunit KdpB by the formation of a transient KdpB/KdpC/ATP ternary complex. The protein is Potassium-transporting ATPase KdpC subunit of Clostridium perfringens (strain ATCC 13124 / DSM 756 / JCM 1290 / NCIMB 6125 / NCTC 8237 / Type A).